Consider the following 377-residue polypeptide: Nitric oxide reductase FlRd-NAD(+) reductase (377 aa).

It belongs to the FAD-dependent oxidoreductase family. FAD is required as a cofactor.

The protein resides in the cytoplasm. The enzyme catalyses 2 reduced [nitric oxide reductase rubredoxin domain] + NAD(+) + H(+) = 2 oxidized [nitric oxide reductase rubredoxin domain] + NADH. It participates in nitrogen metabolism; nitric oxide reduction. Its function is as follows. One of at least two accessory proteins for anaerobic nitric oxide (NO) reductase. Reduces the rubredoxin moiety of NO reductase. In Shigella sonnei (strain Ss046), this protein is Nitric oxide reductase FlRd-NAD(+) reductase.